Reading from the N-terminus, the 2293-residue chain is G-protein coupled receptor 179 (2293 aa).

Positions 1–27 are cleaved as a signal peptide; the sequence is MGARAVVISSLAWGLLSCCFLCSGALG. The tract at residues 62-245 is cache-like region; the sequence is FLYSGDVQRL…CHEGQLRPGW (184 aa). The N-linked (GlcNAc...) asparagine glycan is linked to Asn75. Cysteines 76 and 236 form a disulfide. Asn298 carries N-linked (GlcNAc...) asparagine glycosylation. 7 helical membrane-spanning segments follow: residues 383 to 403, 416 to 436, 445 to 465, 494 to 514, 544 to 564, 585 to 602, and 608 to 628; these read AVLA…LVAY, IVLL…VFIL, CVAL…TIIL, LGQL…GALE, YIMV…CYAT, LLLS…VPSL, and LLLF…LIFI. A disulfide bond links Cys445 and Cys537. An N-linked (GlcNAc...) asparagine glycan is attached at Asn661. The segment at 733 to 812 is disordered; that stretch reads QHSRDSGSLG…GRESLADGPP (80 aa). Residues 738–759 are compositionally biased toward low complexity; that stretch reads SGSLGLGSLPGSSRRRLLSSSL. Positions 773–782 are enriched in basic and acidic residues; it reads STYDHHREHN. An N-linked (GlcNAc...) asparagine glycan is attached at Asn823. Disordered regions lie at residues 872–935, 1046–1235, 1275–1294, 1326–1345, 1388–1411, 1479–1560, 1578–1770, 1792–1828, 1844–1882, 1924–2051, and 2212–2293; these read EERK…HPPI, GTGE…NPAL, ERTE…LSRS, EAVC…QLVH, GTST…ATFW, ELAG…HGGS, ATLS…VCPW, TVGK…TSKG, WKPP…KGEL, SSSH…GSEK, and FLPE…WDCE. Polar residues predominate over residues 1080-1089; sequence LKTPLQQGSV. 3 stretches are compositionally biased toward basic and acidic residues: residues 1105–1123, 1173–1186, and 1275–1286; these read TYKE…KGKP, CQKE…DRNK, and ERTEGGSLEKKP. Composition is skewed to basic and acidic residues over residues 1546–1555 and 1597–1632; these read ASSKAGEKLL and RTSE…RIQK. The segment covering 1644–1663 has biased composition (polar residues); sequence PGSTPQRDTEKAQASLQRQG. Composition is skewed to basic and acidic residues over residues 1682–1698 and 1717–1728; these read GEER…RPND and KKSERLGSEKEV. Over residues 1737–1747 the composition is skewed to polar residues; sequence PGDSSQQPDTP. Composition is skewed to basic and acidic residues over residues 1748–1761, 1796–1813, and 1872–1882; these read NTEK…EHGS, GLER…RQNL, and ASDRASEKGEL. Residues 1937–1948 are compositionally biased toward polar residues; sequence RVSSQPLVSTGD. Over residues 1979-2007 the composition is skewed to basic and acidic residues; the sequence is TETEMSRQDEKEKSQEEKERAPETRDHEG. Pro residues predominate over residues 2283–2293; it reads SPPPDYPWDCE.

Belongs to the G-protein coupled receptor 3 family. As to quaternary structure, homodimer. Associates with the R7 group RGS-GNB5 complexes, composed of an R7 group RGS subunit (RGS6, RGS7, RGS9 or RGS11) and GNB5, promoting their localization to the cell membrane and regulating the GTPase activator activity of R7 RGS proteins. Interacts with TRPM1. Interacts with GRM6. Interacts with EGFLAM; transsynaptic interaction is required for synaptic organization of photoreceptor cells.

Its subcellular location is the cell membrane. The protein localises to the postsynaptic cell membrane. It localises to the cell projection. It is found in the dendrite. Functionally, orphan receptor involved in vision. Required for signal transduction through retinal depolarizing bipolar cells. Acts as an atypical G-protein coupled receptor that recruits and regulates the R7 group RGS-GNB5 complexes instead of activating G proteins: promotes the GTPase activator activity of R7 RGS proteins, increasing the GTPase activity of G protein alpha subunits, thereby driving them into their inactive GDP-bound form. Associates with components of metabotropic signaling cascade in retina ON-bipolar neurons, such as TRPM1 and GRM6: may control the ability of the GRM6 cascade to gate TRPM1. This Mus musculus (Mouse) protein is G-protein coupled receptor 179.